The following is a 465-amino-acid chain: Biotin biosynthesis bifunctional protein BioCD (465 aa).

Positions 1–254 (MTPFLPDRSI…AYGQWRKPRG (254 aa)) are malonyl-ACP O-methyltransferase. ATP contacts are provided by residues D234 and 263 to 268 (GVGKTL). The tract at residues 255 to 465 (VFVTGTDTGV…DSLLSSNASR (211 aa)) is DTB synthetase. A Mg(2+)-binding site is contributed by T267. K283 is a catalytic residue. T287 provides a ligand contact to substrate. Residues D295, 351-354 (EGAG), and 435-437 (PQL) each bind ATP. The Mg(2+) site is built by D295 and E351.

This sequence in the N-terminal section; belongs to the methyltransferase superfamily. It in the C-terminal section; belongs to the dethiobiotin synthetase family. Requires Mg(2+) as cofactor.

The protein resides in the cytoplasm. The catalysed reaction is (7R,8S)-7,8-diammoniononanoate + CO2 + ATP = (4R,5S)-dethiobiotin + ADP + phosphate + 3 H(+). The enzyme catalyses malonyl-[ACP] + S-adenosyl-L-methionine = malonyl-[ACP] methyl ester + S-adenosyl-L-homocysteine. It functions in the pathway cofactor biosynthesis; biotin biosynthesis; biotin from 7,8-diaminononanoate: step 1/2. It participates in cofactor biosynthesis; biotin biosynthesis. Functionally, converts the free carboxyl group of a malonyl-thioester to its methyl ester by transfer of a methyl group from S-adenosyl-L-methionine (SAM). It allows synthesis of pimeloyl-ACP via the fatty acid synthetic pathway. Catalyzes a mechanistically unusual reaction, the ATP-dependent insertion of CO2 between the N7 and N8 nitrogen atoms of 7,8-diaminopelargonic acid (DAPA, also called 7,8-diammoniononanoate) to form a ureido ring. This chain is Biotin biosynthesis bifunctional protein BioCD, found in Bordetella avium (strain 197N).